The following is a 197-amino-acid chain: Small ribosomal subunit protein uS4c (197 aa).

The region spanning 85–161 is the S4 RNA-binding domain; the sequence is MRLDNILFRL…TGKELANHLN (77 aa).

It belongs to the universal ribosomal protein uS4 family. Part of the 30S ribosomal subunit. Contacts protein S5. The interaction surface between S4 and S5 is involved in control of translational fidelity.

It localises to the plastid. Functionally, one of the primary rRNA binding proteins, it binds directly to 16S rRNA where it nucleates assembly of the body of the 30S subunit. With S5 and S12 plays an important role in translational accuracy. The chain is Small ribosomal subunit protein uS4c (rps4) from Cuscuta sandwichiana (Kauna'oa).